The primary structure comprises 417 residues: Gamma-glutamyl phosphate reductase (417 aa).

This sequence belongs to the gamma-glutamyl phosphate reductase family.

It is found in the cytoplasm. It carries out the reaction L-glutamate 5-semialdehyde + phosphate + NADP(+) = L-glutamyl 5-phosphate + NADPH + H(+). It functions in the pathway amino-acid biosynthesis; L-proline biosynthesis; L-glutamate 5-semialdehyde from L-glutamate: step 2/2. Catalyzes the NADPH-dependent reduction of L-glutamate 5-phosphate into L-glutamate 5-semialdehyde and phosphate. The product spontaneously undergoes cyclization to form 1-pyrroline-5-carboxylate. This chain is Gamma-glutamyl phosphate reductase, found in Legionella pneumophila (strain Lens).